Here is a 230-residue protein sequence, read N- to C-terminus: Putative 14-3-3-like protein GF14-H (230 aa).

Belongs to the 14-3-3 family.

Is associated with a DNA binding complex that binds to the G box, a well-characterized cis-acting DNA regulatory element found in plant genes. This Oryza sativa subsp. japonica (Rice) protein is Putative 14-3-3-like protein GF14-H (GF14H).